The primary structure comprises 486 residues: Glutamyl-tRNA(Gln) amidotransferase subunit A (486 aa).

Active-site charge relay system residues include lysine 75 and serine 150. Residue serine 174 is the Acyl-ester intermediate of the active site.

It belongs to the amidase family. GatA subfamily. In terms of assembly, heterotrimer of A, B and C subunits.

The catalysed reaction is L-glutamyl-tRNA(Gln) + L-glutamine + ATP + H2O = L-glutaminyl-tRNA(Gln) + L-glutamate + ADP + phosphate + H(+). In terms of biological role, allows the formation of correctly charged Gln-tRNA(Gln) through the transamidation of misacylated Glu-tRNA(Gln) in organisms which lack glutaminyl-tRNA synthetase. The reaction takes place in the presence of glutamine and ATP through an activated gamma-phospho-Glu-tRNA(Gln). The protein is Glutamyl-tRNA(Gln) amidotransferase subunit A of Trichormus variabilis (strain ATCC 29413 / PCC 7937) (Anabaena variabilis).